A 503-amino-acid chain; its full sequence is E3 ubiquitin-protein ligase IE61 (503 aa).

The RING-type zinc finger occupies 19 to 58 (CAICMSAISGLGKTLPCLHDFCFVCIQTWTSTSAQCPLCR). Disordered regions lie at residues 175-194 (AVITPTTSTGPRLHLSPSSR), 367-418 (SGPI…LFVD), and 445-503 (AALP…VRRK). Over residues 375–388 (GGSTSQDTSVSNIH) the composition is skewed to polar residues. Residues 389–403 (RSPPGGSSTQPSSGR) show a composition bias toward low complexity. Basic residues predominate over residues 404-414 (RPGRPKGVKRR). A compositionally biased stretch (low complexity) spans 471 to 480 (PSTSGSSPSP).

Interacts with host BTRC; this interaction seems to inactivate SCF-mediated protein degradation in general.

It catalyses the reaction S-ubiquitinyl-[E2 ubiquitin-conjugating enzyme]-L-cysteine + [acceptor protein]-L-lysine = [E2 ubiquitin-conjugating enzyme]-L-cysteine + N(6)-ubiquitinyl-[acceptor protein]-L-lysine.. Its function is as follows. RING-finger E3 ubiquitin ligase that degrades host SP100, one of the major components of ND10 nuclear bodies, thereby disrupting the organization of these bodies. Also plays a role in the inhibition of host NF-kappa-B pathway by blocking the SCF(BTRC)-mediated addition of ubiquitin chains to host IkappaBalpha/NFKBIA, thereby interfering with its degradation. This Cercopithecine herpesvirus 9 (strain DHV) (CeHV-9) protein is E3 ubiquitin-protein ligase IE61.